A 407-amino-acid polypeptide reads, in one-letter code: Phosphopentomutase (407 aa).

Asp-11, Asp-305, His-310, Asp-346, His-347, and His-358 together coordinate Mn(2+).

Belongs to the phosphopentomutase family. The cofactor is Mn(2+).

The protein localises to the cytoplasm. It carries out the reaction 2-deoxy-alpha-D-ribose 1-phosphate = 2-deoxy-D-ribose 5-phosphate. The enzyme catalyses alpha-D-ribose 1-phosphate = D-ribose 5-phosphate. It participates in carbohydrate degradation; 2-deoxy-D-ribose 1-phosphate degradation; D-glyceraldehyde 3-phosphate and acetaldehyde from 2-deoxy-alpha-D-ribose 1-phosphate: step 1/2. Functionally, isomerase that catalyzes the conversion of deoxy-ribose 1-phosphate (dRib-1-P) and ribose 1-phosphate (Rib-1-P) to deoxy-ribose 5-phosphate (dRib-5-P) and ribose 5-phosphate (Rib-5-P), respectively. In Legionella pneumophila subsp. pneumophila (strain Philadelphia 1 / ATCC 33152 / DSM 7513), this protein is Phosphopentomutase.